Here is a 259-residue protein sequence, read N- to C-terminus: MAAAPLSYEIRLARDAQEIRASQRLRYAVFVEELGGAGPLIDHENRLEADEFDPLYDHLVLIDATKPEEDLDRVVAAYRLLRSDRAAEIGRFYCDAEYDLTPLRASGRRLLELGRSCVHPDHRGGAAMLMLWNALADYVLAHEIEILFGVASFHGTDVAALQQPLAWLHHHHLAPEGLRPRARQFQRMDLVAKEALDRRAALDAMPNLIKAYLRLGGFVGEGAFVDRPFNTTDVMLLMDTQAMSEKHREFYTRRVEGRG.

The protein belongs to the acetyltransferase family. OlsB subfamily.

It carries out the reaction a (3R)-hydroxyacyl-[ACP] + L-ornithine = a lyso-ornithine lipid + holo-[ACP] + H(+). It participates in lipid metabolism. Catalyzes the first step in the biosynthesis of ornithine lipids, which are phosphorus-free membrane lipids. Catalyzes the 3-hydroxyacyl-acyl carrier protein-dependent acylation of ornithine to form lyso-ornithine lipid (LOL). The sequence is that of L-ornithine N(alpha)-acyltransferase from Rhodobacter capsulatus (strain ATCC BAA-309 / NBRC 16581 / SB1003).